A 397-amino-acid polypeptide reads, in one-letter code: Tryptophan synthase beta chain (397 aa).

An N6-(pyridoxal phosphate)lysine modification is found at lysine 91.

Belongs to the TrpB family. As to quaternary structure, tetramer of two alpha and two beta chains. Pyridoxal 5'-phosphate is required as a cofactor.

It catalyses the reaction (1S,2R)-1-C-(indol-3-yl)glycerol 3-phosphate + L-serine = D-glyceraldehyde 3-phosphate + L-tryptophan + H2O. It functions in the pathway amino-acid biosynthesis; L-tryptophan biosynthesis; L-tryptophan from chorismate: step 5/5. Functionally, the beta subunit is responsible for the synthesis of L-tryptophan from indole and L-serine. The chain is Tryptophan synthase beta chain from Bacillus cereus (strain G9842).